Here is a 179-residue protein sequence, read N- to C-terminus: Cellular nucleic acid-binding protein homolog (179 aa).

7 CCHC-type zinc fingers span residues 17 to 34 (PRCYNCGENGHQARECTK), 36 to 53 (SICYNCNQTGHKASECTE), 58 to 75 (KTCYACGTAGHLVRDCPS), 83 to 100 (AECYKCGRVGHIARDCRT), 116 to 133 (MNCYACGSYGHQARDCTM), 135 to 152 (VKCYSCGKIGHRSFECQQ), and 157 to 174 (QLCYKCNQPGHIAVNCTS).

To human CNBP and to retroviral nucleic acid binding proteins (NBP). Phosphorylated.

It localises to the nucleus. Functionally, acts in the sexual differentiation pathway. Is required for efficient conjugation. Double-stranded DNA-binding protein. In Schizosaccharomyces pombe (strain 972 / ATCC 24843) (Fission yeast), this protein is Cellular nucleic acid-binding protein homolog (byr3).